Consider the following 224-residue polypeptide: PKHD-type hydroxylase SO_3913 (224 aa).

Residues 78–176 (QFYPPLFNRY…RTSAFMWLQS (99 aa)) enclose the Fe2OG dioxygenase domain. 3 residues coordinate Fe cation: H96, D98, and H157. R167 is a binding site for 2-oxoglutarate.

It depends on Fe(2+) as a cofactor. L-ascorbate serves as cofactor.

The chain is PKHD-type hydroxylase SO_3913 from Shewanella oneidensis (strain ATCC 700550 / JCM 31522 / CIP 106686 / LMG 19005 / NCIMB 14063 / MR-1).